The chain runs to 142 residues: Large ribosomal subunit protein bL27m (142 aa).

The segment at 27–48 (TKKSAGSTKNGRTSQPKNLGLK) is disordered. Over residues 30-43 (SAGSTKNGRTSQPK) the composition is skewed to polar residues.

The protein belongs to the bacterial ribosomal protein bL27 family.

The protein localises to the mitochondrion. The chain is Large ribosomal subunit protein bL27m (mrpl27) from Dictyostelium discoideum (Social amoeba).